The primary structure comprises 250 residues: Hydroxyacylglutathione hydrolase (250 aa).

Zn(2+) contacts are provided by histidine 53, histidine 55, aspartate 57, histidine 58, histidine 111, aspartate 128, and histidine 166.

The protein belongs to the metallo-beta-lactamase superfamily. Glyoxalase II family. As to quaternary structure, monomer. Zn(2+) serves as cofactor.

The enzyme catalyses an S-(2-hydroxyacyl)glutathione + H2O = a 2-hydroxy carboxylate + glutathione + H(+). Its pathway is secondary metabolite metabolism; methylglyoxal degradation; (R)-lactate from methylglyoxal: step 2/2. Its function is as follows. Thiolesterase that catalyzes the hydrolysis of S-D-lactoyl-glutathione to form glutathione and D-lactic acid. The chain is Hydroxyacylglutathione hydrolase from Methylobacillus flagellatus (strain ATCC 51484 / DSM 6875 / VKM B-1610 / KT).